The following is a 1239-amino-acid chain: Structural polyprotein (1239 aa).

A disordered region spans residues 15 to 95 (RPAPVQRYIP…KKKSKPGKRM (81 aa)). The segment at 36-62 (RGPSQLQQLVAALGALALQPKQKQKRA) is host transcription inhibition. A compositionally biased stretch (low complexity) spans 38–56 (PSQLQQLVAALGALALQPK). The Nuclear localization signal motif lies at 55–91 (PKQKQKRAQKKPKKTPPPKPKKTQKPKKPTQKKKSKP). The span at 57 to 95 (QKQKRAQKKPKKTPPPKPKKTQKPKKPTQKKKSKPGKRM) shows a compositional bias: basic residues. A binding to the viral RNA region spans residues 78–106 (QKPKKPTQKKKSKPGKRMRNCMKIENDCI). The ribosome-binding stretch occupies residues 91 to 105 (PGKRMRNCMKIENDC). Cysteine 105 and cysteine 120 are joined by a disulfide. One can recognise a Peptidase S3 domain in the interval 105 to 253 (CIFPVMLDGK…RITPEESVEW (149 aa)). Histidine 131 (charge relay system) is an active-site residue. Positions 136–146 (IDNPELAKLTF) match the Nuclear export signal motif. Residues 147–152 (KKSSKY) are interaction with spike glycoprotein E2. Aspartate 153 functions as the Charge relay system in the catalytic mechanism. A dimerization of the capsid protein region spans residues 175-185 (PEGHYNWHHGA). Serine 205 serves as the catalytic Charge relay system. Positions 211 to 215 (DNTGK) are dimerization of the capsid protein. The functions as an uncleaved signal peptide for the precursor of protein E3/E2 stretch occupies residues 254 to 269 (SAAALNITALCVLQNL). Cystine bridges form between cysteine 264–cysteine 273, cysteine 278–cysteine 282, cysteine 281–cysteine 313, cysteine 339–cysteine 443, cysteine 342–cysteine 348, cysteine 411–cysteine 425, cysteine 471–cysteine 585, cysteine 519–cysteine 545, and cysteine 521–cysteine 539. An N-linked (GlcNAc...) asparagine; by host glycan is attached at asparagine 268. Residues 322–686 (SVAHFEAYKA…HYYDLYPYWT (365 aa)) are Extracellular-facing. A helical transmembrane segment spans residues 687 to 707 (ITVLASLGLLIVISSGFSCFL). S-palmitoyl cysteine; by host attachment occurs at residues cysteine 705 and cysteine 708. Topologically, residues 708–751 (CSVARTKCLTPYQLAPGAQLPTFIALLCCAKSARADTLDDFSYL) are cytoplasmic. An interaction with the capsid protein region spans residues 710-714 (VARTK). S-palmitoyl cysteine; by host attachment occurs at residues cysteine 715, cysteine 735, and cysteine 736. A disulfide bridge links cysteine 715 with cysteine 736. Topologically, residues 752–756 (WTNNQ) are extracellular. The chain crosses the membrane as a helical span at residues 757-777 (AMFWLQLASPVAAFLCLSYCC). Residues 778 to 779 (RN) are Cytoplasmic-facing. A helical membrane pass occupies residues 780-800 (LACCMKIFLGISGLCVIATQA). At 801 to 1216 (YEHSTTMPNQ…WQWLAHTTSG (416 aa)) the chain is on the extracellular side. Intrachain disulfides connect cysteine 849/cysteine 914, cysteine 862/cysteine 894, cysteine 863/cysteine 896, and cysteine 868/cysteine 878. The interval 884–901 (VYPFMWGGAYCFCDTENS) is E1 fusion peptide loop. N-linked (GlcNAc...) asparagine; by host glycosylation is found at asparagine 941, asparagine 1009, and asparagine 1070. 4 disulfide bridges follow: cysteine 1059/cysteine 1071, cysteine 1101/cysteine 1176, cysteine 1106/cysteine 1180, and cysteine 1128/cysteine 1170. A helical transmembrane segment spans residues 1217 to 1237 (PLTILVVAIIVVVVVSIVVCA). Cysteine 1236 carries the S-palmitoyl cysteine; by host lipid modification. Residues 1238–1239 (RH) lie on the Cytoplasmic side of the membrane.

As to quaternary structure, homodimer. Homomultimer. Interacts with host karyopherin KPNA4; this interaction allows the nuclear import of the viral capsid protein. Interacts with spike glycoprotein E2. Interacts with host IRAK1; the interaction leads to inhibition of IRAK1-dependent signaling. In terms of assembly, the precursor of protein E3/E2 and E1 form a heterodimer shortly after synthesis. Interacts with spike glycoprotein E1. The precursor of protein E3/E2 and E1 form a heterodimer shortly after synthesis. Processing of the precursor of protein E3/E2 into E2 and E3 results in a heterodimer of the spike glycoproteins E2 and E1. Spike at virion surface are constituted of a trimer of E2-E1 heterodimers. After target cell attachment and endocytosis, E1 change conformation to form homotrimers. Interacts with 6K protein. As to quaternary structure, interacts with spike glycoprotein E1. Processing of the precursor of protein E3/E2 into E2 and E3 results in a heterodimer of the spike glycoproteins E2 and E1. Spike at virion surface are constituted of a trimer of E2-E1 heterodimers. Interacts with 6K protein. Interacts with host MXRA8; this interaction mediates virus entry. Interacts with the capsid protein. In terms of assembly, oligomer. Interacts with spike glycoprotein E1. Interacts with spike glycoprotein E2. In terms of processing, structural polyprotein: Specific enzymatic cleavages in vivo yield mature proteins. Capsid protein is auto-cleaved during polyprotein translation, unmasking a signal peptide at the N-terminus of the precursor of E3/E2. The remaining polyprotein is then targeted to the host endoplasmic reticulum, where host signal peptidase cleaves it into pE2, 6K and E1 proteins. pE2 is further processed to mature E3 and E2 by host furin in trans-Golgi vesicle. Post-translationally, palmitoylated via thioester bonds. These palmitoylations may induce disruption of the C-terminus transmembrane. This would result in the reorientation of E2 C-terminus from lumenal to cytoplasmic side. N-glycosylated. In terms of processing, palmitoylated via thioester bonds.

The protein resides in the virion. The protein localises to the host cytoplasm. It is found in the host cell membrane. It localises to the host nucleus. Its subcellular location is the virion membrane. The protein resides in the host Golgi apparatus. The protein localises to the host trans-Golgi network. It is found in the host endoplasmic reticulum. It catalyses the reaction Autocatalytic release of the core protein from the N-terminus of the togavirus structural polyprotein by hydrolysis of a -Trp-|-Ser- bond.. In terms of biological role, forms an icosahedral capsid with a T=4 symmetry composed of 240 copies of the capsid protein surrounded by a lipid membrane through which penetrate 80 spikes composed of trimers of E1-E2 heterodimers. The capsid protein binds to the viral RNA genome at a site adjacent to a ribosome binding site for viral genome translation following genome release. Possesses a protease activity that results in its autocatalytic cleavage from the nascent structural protein. Following its self-cleavage, the capsid protein transiently associates with ribosomes, and within several minutes the protein binds to viral RNA and rapidly assembles into icosahedric core particles. The resulting nucleocapsid eventually associates with the cytoplasmic domain of the spike glycoprotein E2 at the cell membrane, leading to budding and formation of mature virions. In case of infection, new virions attach to target cells and after clathrin-mediated endocytosis their membrane fuses with the host endosomal membrane. This leads to the release of the nucleocapsid into the cytoplasm, followed by an uncoating event necessary for the genomic RNA to become accessible. The uncoating might be triggered by the interaction of capsid proteins with ribosomes. Binding of ribosomes would release the genomic RNA since the same region is genomic RNA-binding and ribosome-binding. Specifically inhibits interleukin-1 receptor-associated kinase 1/IRAK1-dependent signaling during viral entry, representing a means by which the alphaviruses may evade innate immune detection and activation prior to viral gene expression. Provides the signal sequence for the translocation of the precursor of protein E3/E2 to the host endoplasmic reticulum. Furin-cleaved E3 remains associated with spike glycoprotein E1 and mediates pH protection of the latter during the transport via the secretory pathway. After virion release from the host cell, the assembly protein E3 is gradually released in the extracellular space. Its function is as follows. Plays a role in viral attachment to target host cell, by binding to the cell receptor MXRA8. Synthesized as a p62 precursor which is processed by furin at the cell membrane just before virion budding, giving rise to E2-E1 heterodimer. The p62-E1 heterodimer is stable, whereas E2-E1 is unstable and dissociate at low pH. p62 is processed at the last step, presumably to avoid E1 fusion activation before its final export to cell surface. E2 C-terminus contains a transitory transmembrane that would be disrupted by palmitoylation, resulting in reorientation of the C-terminal tail from lumenal to cytoplasmic side. This step is critical since E2 C-terminus is involved in budding by interacting with capsid proteins. This release of E2 C-terminus in cytoplasm occurs lately in protein export, and precludes premature assembly of particles at the endoplasmic reticulum membrane. Functionally, acts as a viroporin that participates in virus glycoprotein processing and transport to the plasma membrane, cell permeabilization and budding of viral particles. The cation channel is permeable to Na(+)&gt;K(+)&gt;Ca(2+) in vitro. Disrupts the calcium homeostasis of the cell, probably at the endoplasmic reticulum level. This leads to cytoplasmic calcium elevation. Because of its lipophilic properties, the 6K protein is postulated to influence the selection of lipids that interact with the transmembrane domains of the glycoproteins, which, in turn, affects the deformability of the bilayer required for the extreme curvature that occurs as budding proceeds. Present in low amount in virions, about 3% compared to viral glycoproteins. In terms of biological role, class II viral fusion protein. Fusion activity is inactive as long as E1 is bound to E2 in mature virion. After virus attachment to target cell via host MXRA8 and endocytosis, acidification of the endosome induce dissociation of E1/E2 heterodimer and concomitant trimerization of the E1 subunits. This E1 trimer is fusion active, and promotes release of viral nucleocapsid in cytoplasm after endosome and viral membrane fusion. Efficient fusion requires the presence of cholesterol and sphingolipid in the target membrane. In Anopheles amictus (Common banded mosquito), this protein is Structural polyprotein.